The sequence spans 294 residues: uncharacterized protein (294 aa).

A disordered region spans residues 1-215; that stretch reads MTTAITPDKK…DQDDDDQKDL (215 aa). Basic residues-rich tracts occupy residues 27–43 and 50–78; these read TKPR…KSKK and AKKR…KKAP. Low complexity predominate over residues 79 to 88; it reads MKAPSKPAAK. A compositionally biased stretch (polar residues) spans 92–102; that stretch reads QQAQASLQKPI. Over residues 118–136 the composition is skewed to pro residues; it reads PRPPTPIPPTGVKPEPAPR. Over residues 145–160 the composition is skewed to low complexity; the sequence is SVSSTTPRTSATTGTT.

This is an uncharacterized protein from Caenorhabditis elegans.